The chain runs to 1935 residues: Rho GTPase-activating protein 21 (1935 aa).

The interval 1–46 is disordered; the sequence is MATRRATVPEQQQQQPSSPGSEISKNKDGQEQSEMVSPTEEEGFCW. Residues 78 to 163 form the PDZ domain; it reads HTTVKDEENG…TLELSVMPKD (86 aa). Disordered stretches follow at residues 212 to 237, 339 to 373, 413 to 456, 673 to 718, and 862 to 919; these read VEVP…TTQP, PPSY…PGSH, QNTT…QERL, TSTS…DSNS, and NSKT…DVFS. Composition is skewed to polar residues over residues 217–237, 348–373, and 413–429; these read SGTS…TTQP, SMFS…PGSH, and QNTT…SSGQ. 2 stretches are compositionally biased toward low complexity: residues 441–451 and 673–685; these read PQSVQMRQRSV and TSTS…PAHT. The segment covering 708 to 718 has biased composition (polar residues); it reads SPEANAGDSNS. Over residues 863-884 the composition is skewed to basic and acidic residues; that stretch reads SKTERSKSCDEGLDDYKDEGKL. Residues 920–1033 form the PH domain; it reads DSNKEGFLYF…WIKAIQENGN (114 aa). Residues 1056 to 1126 are disordered; it reads TMMSSSSNKS…KGSWRRIMKK (71 aa). A compositionally biased stretch (low complexity) spans 1059–1072; it reads SSSSNKSEQSPKPS. Positions 1097–1119 are enriched in basic and acidic residues; that stretch reads PKQESERRLFSKDDISPPKDKGS. The region spanning 1140–1332 is the Rho-GAP domain; sequence VRLDDCPPAH…TLIQQHDWFF (193 aa). Disordered stretches follow at residues 1341 to 1393, 1411 to 1431, 1488 to 1510, 1525 to 1548, 1637 to 1665, 1688 to 1733, and 1838 to 1925; these read ITAV…GSGK, RKRK…ELDN, SEAT…RLPP, SMSD…KPKV, HRSK…SITP, SIRQ…EPEE, and SELS…SGTQ. Positions 1345–1355 are enriched in polar residues; the sequence is QEESTVESQPV. Low complexity predominate over residues 1376 to 1393; sequence SDSASDSAKSKGSWGSGK. 2 stretches are compositionally biased toward polar residues: residues 1525 to 1543 and 1646 to 1662; these read SMSD…SAQR and RNVQ…TEGS. The segment covering 1691–1705 has biased composition (basic and acidic residues); that stretch reads QKTDSECSAESKNEE. Composition is skewed to polar residues over residues 1872 to 1889 and 1898 to 1911; these read QVST…SQGT and NGDS…NNFS.

The protein localises to the golgi apparatus membrane. Its subcellular location is the cell junction. The protein resides in the cytoplasmic vesicle membrane. It localises to the cytoplasm. It is found in the cytoskeleton. Functionally, GTPase-activating protein (GAP) for rhoa and cdc42. This chain is Rho GTPase-activating protein 21 (arhgap21), found in Xenopus tropicalis (Western clawed frog).